Consider the following 339-residue polypeptide: Phenylalanine--tRNA ligase alpha subunit (339 aa).

Residue Glu-254 coordinates Mg(2+).

The protein belongs to the class-II aminoacyl-tRNA synthetase family. Phe-tRNA synthetase alpha subunit type 1 subfamily. As to quaternary structure, tetramer of two alpha and two beta subunits. It depends on Mg(2+) as a cofactor.

It is found in the cytoplasm. It carries out the reaction tRNA(Phe) + L-phenylalanine + ATP = L-phenylalanyl-tRNA(Phe) + AMP + diphosphate + H(+). This chain is Phenylalanine--tRNA ligase alpha subunit, found in Clostridium perfringens (strain ATCC 13124 / DSM 756 / JCM 1290 / NCIMB 6125 / NCTC 8237 / Type A).